We begin with the raw amino-acid sequence, 607 residues long: Rap1 GTPase-GDP dissociation stimulator 1 (607 aa).

The short motif at 4–13 (LSDTLKKLKI) is the Nuclear export signal (NES) element. ARM repeat units follow at residues 89 to 131 (GLIS…DQAG) and 170 to 211 (DSLQ…NLAE). Residues 122-170 (EGRSAVDQAGGAQIVIDHLRSLCSITDPANEKLLTVFCGMLMNYSNEND) are prevents binding to prenylated RHOA. Lys-230 is subject to N6-acetyllysine. The interval 239 to 255 (DKREMIFEVLAPLAEND) is interacts with polybasic regions in GTPases. 3 ARM repeats span residues 347–390 (DANC…NLAI), 391–431 (PVIN…MLID), and 479–519 (SKDV…LIAA). The interval 379–428 (HAALSALRNLAIPVINKAKMLSAGVTEAVLKFLKSEMPPVQFKLLGTLRM) is critical for catalytic activity.

Interacts with RABL3. Interacts with RHOT1. In terms of assembly, interacts with unprenylated RHOA; the interaction is direct. Interacts with RAP1A. Interacts with KRAS. Interacts with RAC1. Interacts with RAP1B. Preferentially interacts with unprenylated GTPases that will become geranylgeranylated. May also interact with prenylated GTPases. As to quaternary structure, interacts with prenylated RHOA; the interaction is direct and in a 1:1 stoichiometry. Interacts with RAP1A. Interacts with KRAS. Interacts with RAC1. Interacts with RAP1B. Preferentially interacts with prenylated GTPases. Forms covalent cross-links mediated by transglutaminase TGM2, between a glutamine and the epsilon-amino group of a lysine residue, forming homopolymers and heteropolymers.

The protein resides in the cytoplasm. It is found in the cytosol. The protein localises to the endoplasmic reticulum. Its subcellular location is the mitochondrion. It localises to the nucleus. Its function is as follows. Acts as a GEF (guanine nucleotide exchange factor) for the Rho family of small GTP-binding proteins (G proteins) that stimulates the dissociation of GDP to enable subsequent binding of GTP. Additionally, appears to chaperone the processing and/or trafficking of small GTPases containing a C-terminal polybasic region independently of GEF activity. Targets include RAP1A/RAP1B, RHOA, RHOB, RHOC, RAC1 and KRAS. Regulates mitochondrial dynamics by controlling RHOT function to promote mitochondrial fission during high calcium conditions. Able to promote the Ca(2+) release from the endoplasmic reticulum via both inositol trisphosphate (Ins3P) and ryanodine sensitive receptors leading to a enhanced mitochondrial Ca(2+) uptake. Functionally, acts as a GEF (guanine nucleotide exchange factor) for unprenylated RHOA. Chaperones the entry and passage of small GTPases through the prenylation pathway. Recognizes the last amino acid in the GTPase C-terminal CAAX motif with a preference for 'Leu' over 'Met', indicating involvement in the geranylgeranylation pathway. In terms of biological role, acts as a GEF (guanine nucleotide exchange factor) for prenylated RHOA. Acts as a GEF for RHOC. Chaperones the downstream trafficking and/or processing of small newly prenylated GTPases. Escorts RAC1 to the nucleus. The protein is Rap1 GTPase-GDP dissociation stimulator 1 of Homo sapiens (Human).